The sequence spans 187 residues: Calcium and integrin-binding family member 2 (187 aa).

EF-hand domains follow at residues 66–101 (RENP…LCES), 103–138 (PREL…LTKS), and 144–179 (EVVL…APDF). Aspartate 116, asparagine 118, aspartate 120, aspartate 127, aspartate 157, aspartate 159, aspartate 161, lysine 163, and aspartate 168 together coordinate Ca(2+).

Monomer. Homodimer. Interacts with WHRN and MYO7A. Interacts with ITGA2B (via C-terminus cytoplasmic tail region); this interaction is stabilized/increased in a calcium and magnesium-dependent manner. Interacts with ITGA7 (via C-terminus cytoplasmic tail region); this interaction is stabilized/increased in a calcium and magnesium-dependent manner. Interacts with TMC1. Interacts with TMC2. Interacts with PIEZO1. Expressed in inner and outer segments of photoreceptor cells, as well as in the pigmented epithelium. Also observed in the inner and outer plexiform layers and in the ganglion cell layer (at protein level). Expressed in sensory hair cell stereocilia, with expression mainly at the basal body of the kinocilium and in the hair bundle stereocilia; and the apical surface of hair cells (at protein level). Located in the tip region of the stereocilia and at the apical surface of hair cells around the cuticular plate (at protein level). Not expressed in the hair bundles of the vestibular hair cells. Strongly expressed in skeletal muscles, brain, kidney and liver. Expressed in the skeletal muscle, retina and cochlea. Expressed in megakaryocytes and endothelial cells. Expressed in heart, spleen, lung, and inner ear. In the inner ear, expressed in the vestibule, basilar membrane and spiral ganglion cells. Expressed in the supporting cells in both the organ of Corti and the vestibular sensory epithelia.

The protein localises to the cytoplasm. The protein resides in the cell projection. Its subcellular location is the stereocilium. It localises to the photoreceptor inner segment. It is found in the cilium. The protein localises to the photoreceptor outer segment. The protein resides in the cell membrane. Its subcellular location is the sarcolemma. Calcium- and integrin-binding protein that plays a role in intracellular calcium homeostasis. Acts as an auxiliary subunit of the sensory mechanoelectrical transduction (MET) channel in hair cells. Essential for mechanoelectrical transduction (MET) currents in auditory hair cells and thereby required for hearing. Regulates the function of hair cell mechanotransduction by controlling the distribution of transmembrane channel-like proteins TMC1 and TMC2, and by regulating the function of the MET channels in hair cells. Required for the maintenance of auditory hair cell stereocilia bundle morphology and function and for hair-cell survival in the cochlea. Critical for proper photoreceptor cell maintenance and function. Plays a role in intracellular calcium homeostasis by decreasing ATP-induced calcium release. Seems to be dispensable for vestibular functions. The chain is Calcium and integrin-binding family member 2 (Cib2) from Mus musculus (Mouse).